The sequence spans 209 residues: Small ribosomal subunit protein uS4 (209 aa).

The 64-residue stretch at 98–161 (ARLDNVVYRM…RDLEVIKKAV (64 aa)) folds into the S4 RNA-binding domain.

Belongs to the universal ribosomal protein uS4 family. In terms of assembly, part of the 30S ribosomal subunit. Contacts protein S5. The interaction surface between S4 and S5 is involved in control of translational fidelity.

Functionally, one of the primary rRNA binding proteins, it binds directly to 16S rRNA where it nucleates assembly of the body of the 30S subunit. With S5 and S12 plays an important role in translational accuracy. The protein is Small ribosomal subunit protein uS4 of Thermotoga petrophila (strain ATCC BAA-488 / DSM 13995 / JCM 10881 / RKU-1).